We begin with the raw amino-acid sequence, 313 residues long: Cytosolic Fe-S cluster assembly factor NUBP1 homolog (313 aa).

Residues 1–25 are disordered; that stretch reads MSDVPDDANAGCPGTGSAGAGKASG. [4Fe-4S] cluster contacts are provided by cysteine 12, cysteine 26, cysteine 29, and cysteine 35. 66–73 serves as a coordination point for ATP; it reads GKGGVGKS. The [4Fe-4S] cluster site is built by cysteine 240 and cysteine 243.

The protein belongs to the Mrp/NBP35 ATP-binding proteins family. NUBP1/NBP35 subfamily. As to quaternary structure, heterotetramer of 2 NUBP1 and 2 NUBP2 chains. [4Fe-4S] cluster is required as a cofactor. In terms of tissue distribution, expressed in head amphid and labial ciliated sensory neurons and tail phasmid ciliated chemosensory neurons.

The protein localises to the cytoplasm. Its subcellular location is the cell projection. Functionally, component of the cytosolic iron-sulfur (Fe/S) protein assembly (CIA) machinery. Required for maturation of extramitochondrial Fe-S proteins. The NUBP1-NUBP2 heterotetramer forms a Fe-S scaffold complex, mediating the de novo assembly of an Fe-S cluster and its transfer to target apoproteins. Regulates cilium formation and structure. This chain is Cytosolic Fe-S cluster assembly factor NUBP1 homolog, found in Caenorhabditis elegans.